The chain runs to 415 residues: Esterase FrsA (415 aa).

It belongs to the FrsA family.

The catalysed reaction is a carboxylic ester + H2O = an alcohol + a carboxylate + H(+). Functionally, catalyzes the hydrolysis of esters. This chain is Esterase FrsA, found in Yersinia enterocolitica serotype O:8 / biotype 1B (strain NCTC 13174 / 8081).